The following is a 475-amino-acid chain: UDP-N-acetylmuramate--L-alanine ligase (475 aa).

125 to 131 (GTHGKTT) contacts ATP.

This sequence belongs to the MurCDEF family.

It localises to the cytoplasm. It catalyses the reaction UDP-N-acetyl-alpha-D-muramate + L-alanine + ATP = UDP-N-acetyl-alpha-D-muramoyl-L-alanine + ADP + phosphate + H(+). The protein operates within cell wall biogenesis; peptidoglycan biosynthesis. Its function is as follows. Cell wall formation. The chain is UDP-N-acetylmuramate--L-alanine ligase from Actinobacillus pleuropneumoniae serotype 5b (strain L20).